The sequence spans 469 residues: Reticulon-2 (469 aa).

Disordered regions lie at residues 1 to 180 and 201 to 238; these read MGQV…EASE and LTPQLSPSSGIPQAHTPSPQRSQDLNTGPDEPLPNGEG. Positions 14 to 25 are enriched in low complexity; it reads APSTASSTPDST. Basic and acidic residues predominate over residues 32–43; sequence SDFRELHTAREF. At serine 44 the chain carries Phosphoserine. Residues 135 to 144 show a composition bias toward basic and acidic residues; the sequence is RPLEELRLRL. 2 stretches are compositionally biased toward polar residues: residues 159-168 and 203-226; these read DSATSSSTPL and PQLSPSSGIPQAHTPSPQRSQDLN. Residues 270 to 469 enclose the Reticulon domain; that stretch reads VADLLYWKDT…SVSGSKAKAE (200 aa). 2 helical membrane-spanning segments follow: residues 293–313 and 388–408; these read LLCLLHFSIVSVAAHLALLGL and LLFYILTFVGAIFNGLTLVIL.

As to quaternary structure, interacts with SPAST. Interacts with BACE1. Interacts (via first transmembrane domain) with ARL6IP5/GTRAP3-18. Interacts (via N-terminus) with SLC1A1/EAAC1; the interaction promotes cell surface expression of SLC1A1. In terms of tissue distribution, expressed in brain and spinal cord (at protein level). In the embryonic brain cortex, expressed in neurons but not in astrocytes (at protein level).

It localises to the endoplasmic reticulum membrane. It is found in the sarcoplasmic reticulum membrane. The protein resides in the cell membrane. Its subcellular location is the sarcolemma. The protein localises to the T-tubule. It localises to the cytoplasm. It is found in the myofibril. The protein resides in the sarcomere. Its subcellular location is the z line. The protein localises to the cytoskeleton. In terms of biological role, inhibits amyloid precursor protein processing, probably by blocking BACE1 activity. Enhances trafficking of the glutamate transporter SLC1A1/EAAC1 from the endoplasmic reticulum to the cell surface. Plays a role in the translocation of SLC2A4/GLUT4 from intracellular membranes to the cell membrane which facilitates the uptake of glucose into the cell. This Rattus norvegicus (Rat) protein is Reticulon-2.